The primary structure comprises 229 residues: Movement and silencing protein TGBp1 (229 aa).

The region spanning 1–114 (MVEFTKRLLL…PAAQVPHFVK (114 aa)) is the (+)RNA virus helicase ATP-binding domain. Residues 115–229 (LFSHRCGLNS…MSFDAADTSA (115 aa)) form the (+)RNA virus helicase C-terminal domain.

The protein belongs to the Tymovirales TGBp1 protein family. As to quaternary structure, homodimer and homooligomer. Interacts with capsid protein. Interacts with host AGO1; this interaction targets the host protein for degradation, thereby suppressing the antiviral RNA silencing.

It localises to the host cytoplasm. Transports viral genome to neighboring plant cells directly through plasmosdesmata, without any budding. The movement protein allows efficient cell to cell propagation, by bypassing the host cell wall barrier. Increases plasmodesma size exclusion limit. Acts as a suppressor of RNA-mediated gene silencing, also known as post-transcriptional gene silencing (PTGS), a mechanism of plant viral defense that limits the accumulation of viral RNAs. The sequence is that of Movement and silencing protein TGBp1 from Strawberry mild yellow edge-associated virus (SMYEaV).